The primary structure comprises 221 residues: Octanoyltransferase (221 aa).

The BPL/LPL catalytic domain occupies 40–218; it reads PNLEDVLILL…AFAEVFGLEL (179 aa). Residues 82–89, 149–151, and 162–164 each bind substrate; these read RGGEVTYH, AIG, and GFA. Residue C180 is the Acyl-thioester intermediate of the active site.

It belongs to the LipB family.

The protein localises to the cytoplasm. It catalyses the reaction octanoyl-[ACP] + L-lysyl-[protein] = N(6)-octanoyl-L-lysyl-[protein] + holo-[ACP] + H(+). It functions in the pathway protein modification; protein lipoylation via endogenous pathway; protein N(6)-(lipoyl)lysine from octanoyl-[acyl-carrier-protein]: step 1/2. In terms of biological role, catalyzes the transfer of endogenously produced octanoic acid from octanoyl-acyl-carrier-protein onto the lipoyl domains of lipoate-dependent enzymes. Lipoyl-ACP can also act as a substrate although octanoyl-ACP is likely to be the physiological substrate. The protein is Octanoyltransferase of Nostoc sp. (strain PCC 7120 / SAG 25.82 / UTEX 2576).